We begin with the raw amino-acid sequence, 43 residues long: uncharacterized protein (43 aa).

Positions 13–43 are disordered; that stretch reads QLPRLSRPRQSHLPAQTPQPRLSYPKTRRQI.

This is an uncharacterized protein from Clover yellow mosaic virus (CYMV).